We begin with the raw amino-acid sequence, 452 residues long: Exodeoxyribonuclease 7 large subunit (452 aa).

This sequence belongs to the XseA family. As to quaternary structure, heterooligomer composed of large and small subunits.

It is found in the cytoplasm. It catalyses the reaction Exonucleolytic cleavage in either 5'- to 3'- or 3'- to 5'-direction to yield nucleoside 5'-phosphates.. Its function is as follows. Bidirectionally degrades single-stranded DNA into large acid-insoluble oligonucleotides, which are then degraded further into small acid-soluble oligonucleotides. This is Exodeoxyribonuclease 7 large subunit from Bacillus cereus (strain G9842).